Here is an 87-residue protein sequence, read N- to C-terminus: Small ribosomal subunit protein bS20 (87 aa).

It belongs to the bacterial ribosomal protein bS20 family.

In terms of biological role, binds directly to 16S ribosomal RNA. The polypeptide is Small ribosomal subunit protein bS20 (Neorickettsia sennetsu (strain ATCC VR-367 / Miyayama) (Ehrlichia sennetsu)).